Reading from the N-terminus, the 433-residue chain is 3-phosphoshikimate 1-carboxyvinyltransferase (433 aa).

3 residues coordinate 3-phosphoshikimate: lysine 21, serine 22, and arginine 26. Lysine 21 lines the phosphoenolpyruvate pocket. Phosphoenolpyruvate is bound by residues glycine 92 and arginine 120. The 3-phosphoshikimate site is built by serine 166, glutamine 168, aspartate 317, and lysine 344. Glutamine 168 contacts phosphoenolpyruvate. Catalysis depends on aspartate 317, which acts as the Proton acceptor. Phosphoenolpyruvate contacts are provided by arginine 348 and arginine 391.

The protein belongs to the EPSP synthase family. As to quaternary structure, monomer.

The protein resides in the cytoplasm. The enzyme catalyses 3-phosphoshikimate + phosphoenolpyruvate = 5-O-(1-carboxyvinyl)-3-phosphoshikimate + phosphate. It functions in the pathway metabolic intermediate biosynthesis; chorismate biosynthesis; chorismate from D-erythrose 4-phosphate and phosphoenolpyruvate: step 6/7. In terms of biological role, catalyzes the transfer of the enolpyruvyl moiety of phosphoenolpyruvate (PEP) to the 5-hydroxyl of shikimate-3-phosphate (S3P) to produce enolpyruvyl shikimate-3-phosphate and inorganic phosphate. The chain is 3-phosphoshikimate 1-carboxyvinyltransferase from Caldicellulosiruptor saccharolyticus (strain ATCC 43494 / DSM 8903 / Tp8T 6331).